The following is a 154-amino-acid chain: Jupiter microtubule associated homolog 1 (154 aa).

Met-1 is modified (N-acetylmethionine). Residues 1–19 show a composition bias toward polar residues; the sequence is MTTTTTFKGVDPNSRNSSR. The interval 1 to 154 is disordered; sequence MTTTTTFKGV…PGGKSSLVLG (154 aa). Position 2 is an N-acetylthreonine; in Hematological and neurological expressed 1 protein, N-terminally processed (Thr-2). A phosphoserine mark is found at Ser-28 and Ser-31. Thr-54 is modified (phosphothreonine). Phosphoserine occurs at positions 71, 87, 88, and 92. The span at 79-91 shows a compositional bias: polar residues; that stretch reads SPGTQRSNSSEAS. Over residues 96–108 the composition is skewed to basic and acidic residues; that stretch reads LDLKGEGDMHENV. A compositionally biased stretch (pro residues) spans 125 to 138; it reads PAAPVPSPVAPAPV. Ser-131 is modified (phosphoserine). Lys-148 carries the post-translational modification N6-acetyllysine.

The protein belongs to the JUPITER family. As to quaternary structure, interacts with the complex composed, at least, of APC, CTNNB1 and GSK3B; the interaction takes place with the inactive form of GSK3B (phosphorylated at 'Ser-9'). Expressed in yolk sac, fetal brain, brain, spleen and bone marrow.

It is found in the nucleus. It localises to the cytoplasm. Its function is as follows. Modulates negatively AKT-mediated GSK3B signaling. Induces CTNNB1 'Ser-33' phosphorylation and degradation through the suppression of the inhibitory 'Ser-9' phosphorylation of GSK3B, which represses the function of the APC:CTNNB1:GSK3B complex and the interaction with CDH1/E-cadherin in adherent junctions. Plays a role in the regulation of cell cycle and cell adhesion. Has an inhibitory role on AR-signaling pathway through the induction of receptor proteasomal degradation. The sequence is that of Jupiter microtubule associated homolog 1 from Mus musculus (Mouse).